Consider the following 143-residue polypeptide: Small ribosomal subunit protein bS6 (143 aa).

The interval 95–143 is disordered; the sequence is GPDTEQSFIMKSKDDKGDKPERRRRDDDENGDVGVSNDSDNDGGNAEAA. Residues 105–121 are compositionally biased toward basic and acidic residues; sequence KSKDDKGDKPERRRRDD.

Belongs to the bacterial ribosomal protein bS6 family.

Functionally, binds together with bS18 to 16S ribosomal RNA. This Xylella fastidiosa (strain M23) protein is Small ribosomal subunit protein bS6.